We begin with the raw amino-acid sequence, 671 residues long: Putative glycoside hydrolase BT_3595 (671 aa).

The first 24 residues, 1–24, serve as a signal peptide directing secretion; it reads MITGIISILCYLQCFGTLSASVTA.

Belongs to the glycoside hydrolase-like 3 (GHL3) family.

The chain is Putative glycoside hydrolase BT_3595 from Bacteroides thetaiotaomicron (strain ATCC 29148 / DSM 2079 / JCM 5827 / CCUG 10774 / NCTC 10582 / VPI-5482 / E50).